A 1104-amino-acid chain; its full sequence is DNA polymerase delta catalytic subunit (1104 aa).

Residues 1-60 (MKRSIVTGGGNNDKKFKAQPPPKNNYRGGGDDEEDDEFEEDDDEDEGDEFGEEEDEDDID) are disordered. Positions 31–60 (DDEEDDEFEEDDDEDEGDEFGEEEDEDDID) are enriched in acidic residues. Zn(2+)-binding residues include Cys1012, Cys1015, Cys1027, and Cys1030. The segment at 1012 to 1030 (CMNCPKELTDTESTTCINC) adopts a CysA-type zinc-finger fold. 4 residues coordinate [4Fe-4S] cluster: Cys1059, Cys1062, Cys1072, and Cys1077. Residues 1059–1077 (CQRCSGSLHQPVLCSNRDC) carry the CysB motif motif.

This sequence belongs to the DNA polymerase type-B family. In terms of assembly, heterotetramer composed of subunits of 125 kDa, 50 kDa, 66 kDa and 12 kDa. The 125 kDa subunit contains the polymerase active site and most likely the active site for the 3'-5' exonuclease activity. [4Fe-4S] cluster is required as a cofactor.

Its subcellular location is the nucleus. It catalyses the reaction DNA(n) + a 2'-deoxyribonucleoside 5'-triphosphate = DNA(n+1) + diphosphate. Functionally, possesses two enzymatic activities: DNA synthesis (polymerase) and an exonucleolytic activity that degrades single stranded DNA in the 3'- to 5'-direction. This Dictyostelium discoideum (Social amoeba) protein is DNA polymerase delta catalytic subunit (pold1).